A 364-amino-acid chain; its full sequence is Eukaryotic translation initiation factor 3 subunit H (364 aa).

Positions 13-162 constitute an MPN domain; that stretch reads VQVDALVAIK…LRAYRLSPSF (150 aa).

The protein belongs to the eIF-3 subunit H family. In terms of assembly, component of the eukaryotic translation initiation factor 3 (eIF-3) complex.

It is found in the cytoplasm. In terms of biological role, component of the eukaryotic translation initiation factor 3 (eIF-3) complex, which is involved in protein synthesis of a specialized repertoire of mRNAs and, together with other initiation factors, stimulates binding of mRNA and methionyl-tRNAi to the 40S ribosome. The eIF-3 complex specifically targets and initiates translation of a subset of mRNAs involved in cell proliferation. The sequence is that of Eukaryotic translation initiation factor 3 subunit H from Phaeosphaeria nodorum (strain SN15 / ATCC MYA-4574 / FGSC 10173) (Glume blotch fungus).